A 61-amino-acid polypeptide reads, in one-letter code: Metallothionein (61 aa).

At Met1 the chain carries N-acetylmethionine. Positions 1–29 (MDPNCSCAAGGSCTCAGSCKCKECKCTSC) are beta. Positions 5, 7, 13, 15, 19, 21, 24, 26, 29, 33, 34, 36, 37, 41, 44, 48, 50, 57, 59, and 60 each coordinate a divalent metal cation. Residues 30–61 (KKSCCSCCPPGCTKCAQGCVCKGASDKCNCCA) form an alpha region.

It belongs to the metallothionein superfamily. Type 1 family. In terms of assembly, monomer.

Its function is as follows. Metallothioneins have a high content of cysteine residues that bind various heavy metals. The sequence is that of Metallothionein from Balaena mysticetus (Bowhead whale).